We begin with the raw amino-acid sequence, 162 residues long: ATP synthase subunit b (162 aa).

Residues 4-24 (INWGSIIYQLIAFCVLLWLLS) traverse the membrane as a helical segment.

Belongs to the ATPase B chain family. As to quaternary structure, F-type ATPases have 2 components, F(1) - the catalytic core - and F(0) - the membrane proton channel. F(1) has five subunits: alpha(3), beta(3), gamma(1), delta(1), epsilon(1). F(0) has three main subunits: a(1), b(2) and c(10-14). The alpha and beta chains form an alternating ring which encloses part of the gamma chain. F(1) is attached to F(0) by a central stalk formed by the gamma and epsilon chains, while a peripheral stalk is formed by the delta and b chains.

The protein resides in the cell membrane. In terms of biological role, f(1)F(0) ATP synthase produces ATP from ADP in the presence of a proton or sodium gradient. F-type ATPases consist of two structural domains, F(1) containing the extramembraneous catalytic core and F(0) containing the membrane proton channel, linked together by a central stalk and a peripheral stalk. During catalysis, ATP synthesis in the catalytic domain of F(1) is coupled via a rotary mechanism of the central stalk subunits to proton translocation. Its function is as follows. Component of the F(0) channel, it forms part of the peripheral stalk, linking F(1) to F(0). The protein is ATP synthase subunit b of Halalkalibacterium halodurans (strain ATCC BAA-125 / DSM 18197 / FERM 7344 / JCM 9153 / C-125) (Bacillus halodurans).